The following is a 227-amino-acid chain: Small ribosomal subunit protein uS3 (227 aa).

The region spanning 39-108 is the KH type-2 domain; sequence IRKFVEERYK…DVTVNVDEVK (70 aa).

The protein belongs to the universal ribosomal protein uS3 family. Part of the 30S ribosomal subunit. Forms a tight complex with proteins S10 and S14.

In terms of biological role, binds the lower part of the 30S subunit head. Binds mRNA in the 70S ribosome, positioning it for translation. The chain is Small ribosomal subunit protein uS3 from Persephonella marina (strain DSM 14350 / EX-H1).